We begin with the raw amino-acid sequence, 709 residues long: Heme/hemopexin utilization protein C (709 aa).

A signal peptide spans 1-21; it reads MRFSKLSLAITTTLVTANALA. The 112-residue stretch at 36-147 folds into the TBDR plug domain; sequence DPSRFTYTPQ…LGGVVAMRTP (112 aa). Residues 158–709 form the TBDR beta-barrel domain; it reads KFGVKIRQGY…NAKISAVYSF (552 aa). Residues 692 to 709 carry the TonB C-terminal box motif; that stretch reads SLMEGTGRNAKISAVYSF.

The protein belongs to the TonB-dependent receptor family.

It localises to the cell outer membrane. Required for utilization of free heme at low concentrations. The protein is Heme/hemopexin utilization protein C (hxuC) of Haemophilus influenzae (strain 86-028NP).